The primary structure comprises 404 residues: NADH-quinone oxidoreductase subunit D 1 (404 aa).

This sequence belongs to the complex I 49 kDa subunit family. In terms of assembly, NDH-1 is composed of 14 different subunits. Subunits NuoB, C, D, E, F, and G constitute the peripheral sector of the complex.

It localises to the cell inner membrane. The catalysed reaction is a quinone + NADH + 5 H(+)(in) = a quinol + NAD(+) + 4 H(+)(out). In terms of biological role, NDH-1 shuttles electrons from NADH, via FMN and iron-sulfur (Fe-S) centers, to quinones in the respiratory chain. The immediate electron acceptor for the enzyme in this species is believed to be ubiquinone. Couples the redox reaction to proton translocation (for every two electrons transferred, four hydrogen ions are translocated across the cytoplasmic membrane), and thus conserves the redox energy in a proton gradient. This is NADH-quinone oxidoreductase subunit D 1 from Sorangium cellulosum (strain So ce56) (Polyangium cellulosum (strain So ce56)).